The chain runs to 164 residues: uncharacterized protein (164 aa).

The next 4 membrane-spanning stretches (helical) occupy residues 25–45 (QFGF…PLLG), 63–83 (GMAV…VYIV), 120–140 (FWTA…ADFF), and 141–161 (TVQM…LMMM).

Belongs to the major facilitator superfamily.

It localises to the cell membrane. This is an uncharacterized protein from Bacillus subtilis (strain 168).